The following is a 125-amino-acid chain: Thioredoxin H-type (125 aa).

In terms of domain architecture, Thioredoxin spans 2 to 112 (AEGNVFACHS…LERKVAALAA (111 aa)). Residues Cys-38 and Cys-41 each act as nucleophile in the active site. The cysteines at positions 38 and 41 are disulfide-linked.

The protein belongs to the thioredoxin family. Plant H-type subfamily.

It is found in the cytoplasm. Functionally, participates in various redox reactions through the reversible oxidation of the active center dithiol to a disulfide. The H form is known to activate a number of cytosolic enzymes. In Picea mariana (Black spruce), this protein is Thioredoxin H-type (SB09).